Reading from the N-terminus, the 676-residue chain is Methionine--tRNA ligase (676 aa).

Residues 15–25 (PYANGSIHLGH) carry the 'HIGH' region motif. Zn(2+)-binding residues include C146, C149, C159, and C162. The 'KMSKS' region motif lies at 332–336 (KMSKS). K335 serves as a coordination point for ATP. The region spanning 574-676 (DFAKVDMRIA…SGAQPGQQVK (103 aa)) is the tRNA-binding domain.

Belongs to the class-I aminoacyl-tRNA synthetase family. MetG type 1 subfamily. As to quaternary structure, homodimer. Zn(2+) serves as cofactor.

The protein resides in the cytoplasm. It catalyses the reaction tRNA(Met) + L-methionine + ATP = L-methionyl-tRNA(Met) + AMP + diphosphate. Functionally, is required not only for elongation of protein synthesis but also for the initiation of all mRNA translation through initiator tRNA(fMet) aminoacylation. This Erwinia tasmaniensis (strain DSM 17950 / CFBP 7177 / CIP 109463 / NCPPB 4357 / Et1/99) protein is Methionine--tRNA ligase.